The sequence spans 129 residues: Small ribosomal subunit protein uS8 (129 aa).

Belongs to the universal ribosomal protein uS8 family. In terms of assembly, part of the 30S ribosomal subunit.

In terms of biological role, one of the primary rRNA binding proteins, it binds directly to 16S rRNA central domain where it helps coordinate assembly of the platform of the 30S subunit. This chain is Small ribosomal subunit protein uS8, found in Thermoplasma acidophilum (strain ATCC 25905 / DSM 1728 / JCM 9062 / NBRC 15155 / AMRC-C165).